Reading from the N-terminus, the 456-residue chain is tRNA modification GTPase MnmE (456 aa).

The (6S)-5-formyl-5,6,7,8-tetrahydrofolate site is built by Arg-24, Glu-81, and Lys-120. In terms of domain architecture, TrmE-type G spans 216 to 379; it reads GMTVVIAGRP…LRDHLKACMG (164 aa). K(+) is bound at residue Asn-226. GTP contacts are provided by residues 226–231, 245–251, 270–273, and 335–338; these read NAGKSS, TAIAGTT, DTAG, and NKAD. Ser-230 provides a ligand contact to Mg(2+). The K(+) site is built by Thr-245, Ile-247, and Thr-250. Thr-251 is a binding site for Mg(2+). Residue Lys-456 coordinates (6S)-5-formyl-5,6,7,8-tetrahydrofolate.

Belongs to the TRAFAC class TrmE-Era-EngA-EngB-Septin-like GTPase superfamily. TrmE GTPase family. As to quaternary structure, homodimer. Heterotetramer of two MnmE and two MnmG subunits. Requires K(+) as cofactor.

The protein localises to the cytoplasm. Exhibits a very high intrinsic GTPase hydrolysis rate. Involved in the addition of a carboxymethylaminomethyl (cmnm) group at the wobble position (U34) of certain tRNAs, forming tRNA-cmnm(5)s(2)U34. The polypeptide is tRNA modification GTPase MnmE (Pseudomonas putida (strain W619)).